The sequence spans 34 residues: MINWQVIGQLIATGAIMLAGPAVIVLLALKKGNL.

A helical membrane pass occupies residues 6–26 (VIGQLIATGAIMLAGPAVIVL).

This sequence belongs to the Psb30/Ycf12 family. As to quaternary structure, PSII is composed of 1 copy each of membrane proteins PsbA, PsbB, PsbC, PsbD, PsbE, PsbF, PsbH, PsbI, PsbJ, PsbK, PsbL, PsbM, PsbT, PsbX, PsbY, PsbZ, Psb30/Ycf12, peripheral proteins of the oxygen-evolving complex and a large number of cofactors. It forms dimeric complexes.

It is found in the plastid. It localises to the chloroplast thylakoid membrane. Its function is as follows. A core subunit of photosystem II (PSII), probably helps stabilize the reaction center. The polypeptide is Photosystem II reaction center protein Psb30 (Trieres chinensis (Marine centric diatom)).